The chain runs to 350 residues: GTPase Obg (350 aa).

The Obg domain occupies 1 to 159 (MKFLDQAKIY…RWIWLRLKLI (159 aa)). An OBG-type G domain is found at 160–328 (ADVGLVGLPN…VLRLLQDRVT (169 aa)). Residues 166-173 (GLPNAGKS), 191-195 (FTTLH), 213-216 (DIPG), 280-283 (NKID), and 309-311 (SGV) contribute to the GTP site. Residues Ser-173 and Thr-193 each coordinate Mg(2+). A disordered region spans residues 331-350 (REAARDAAPPQAAAGREETA).

It belongs to the TRAFAC class OBG-HflX-like GTPase superfamily. OBG GTPase family. As to quaternary structure, monomer. It depends on Mg(2+) as a cofactor.

Its subcellular location is the cytoplasm. In terms of biological role, an essential GTPase which binds GTP, GDP and possibly (p)ppGpp with moderate affinity, with high nucleotide exchange rates and a fairly low GTP hydrolysis rate. Plays a role in control of the cell cycle, stress response, ribosome biogenesis and in those bacteria that undergo differentiation, in morphogenesis control. This chain is GTPase Obg, found in Gluconacetobacter diazotrophicus (strain ATCC 49037 / DSM 5601 / CCUG 37298 / CIP 103539 / LMG 7603 / PAl5).